The following is a 153-amino-acid chain: Heavy metal-associated isoprenylated plant protein 26 (153 aa).

In terms of domain architecture, HMA spans 25-89; it reads LQTVEIKVKM…MSHRTGKKVE (65 aa). Cys-36 and Cys-39 together coordinate a metal cation. Cys-150 is subject to Cysteine methyl ester. A lipid anchor (S-farnesyl cysteine) is attached at Cys-150. The propeptide at 151–153 is removed in mature form; sequence VVM.

Belongs to the HIPP family. Interacts with ZHD11/HB29 and ACBP2 (via ankyrin repeats). May also interact with HB21. Expressed in roots, stems and flowers. Lower expression in siliques and leaves. Expressed in the vascular tissues. Detected in lateral roots, shoot apical meristem, petals of unopened flowers and weak expression in leaf vasculature.

The protein localises to the nucleus membrane. It localises to the cell membrane. Functionally, heavy-metal-binding protein. Binds lead, cadmium and copper. May be involved in heavy-metal transport. May be involved in cadmium transport and play a role in cadmium detoxification. The polypeptide is Heavy metal-associated isoprenylated plant protein 26 (Arabidopsis thaliana (Mouse-ear cress)).